A 230-amino-acid chain; its full sequence is Early E1A protein (230 aa).

An interaction with RB1 in competition with E2F1 region spans residues 40–48 (PSLHDLFDL). Positions 106–110 (LLCLE) match the LXCXE motif, interaction with host RB1 motif. A zinc finger spans residues 145–163 (CLRCAYYQEQGENSICGLC). Positions 189 to 230 (KPGSRKRSAVTSRGSVESSKRPCLPEPEQTEPLDLSLKPRPQ) are disordered. The PXDLS motif, CTBP-binding signature appears at 220–224 (PLDLS). The Nuclear localization signal signature appears at 226-230 (KPRPQ).

Belongs to the adenoviridae E1A protein family. In terms of assembly, interacts with host UBE2I; this interaction interferes with polySUMOylation. Interacts with host RB1; this interaction induces the aberrant dissociation of RB1-E2F1 complex thereby disrupting the activity of RB1 and activating E2F1-regulated genes. Interacts with host ATF7; the interaction enhances ATF7-mediated viral transactivation activity which requires the zinc binding domains of both proteins. Isoform early E1A 32 kDa protein and isoform early E1A 26 kDa protein interact (via N-terminus) with CUL1 and E3 ubiquitin ligase RBX1; these interactions inhibit RBX1-CUL1-dependent elongation reaction of ubiquitin chains and attenuate ubiquitination of SCF(FBXW7) target proteins. Interacts (via PXLXP motif) with host ZMYND11/BS69 (via MYND-type zinc finger); this interaction inhibits E1A mediated transactivation. Interacts with host EP300; this interaction stimulates the acetylation of RB1 by recruiting EP300 and RB1 into a multimeric-protein complex. Interacts with host CTBP1 and CTBP2; this interaction seems to potentiate viral replication. Interacts with host DCAF7. Interacts with host DYRK1A. Interacts with host KPNA4; this interaction allows E1A import into the host nucleus. Interacts with host EP400; this interaction stabilizes MYC. Interacts with host TBP protein; this interaction probably disrupts the TBP-TATA complex.

Its subcellular location is the host nucleus. Its function is as follows. Plays a role in viral genome replication by driving entry of quiescent cells into the cell cycle. Stimulation of progression from G1 to S phase allows the virus to efficiently use the cellular DNA replicating machinery to achieve viral genome replication. E1A protein has both transforming and trans-activating activities. Induces the disassembly of the E2F1 transcription factor from RB1 by direct competition for the same binding site on RB1, with subsequent transcriptional activation of E2F1-regulated S-phase genes and of the E2 region of the adenoviral genome. Release of E2F1 leads to the ARF-mediated inhibition of MDM2 and causes TP53/p53 to accumulate because it is not targeted for degradation by MDM2-mediated ubiquitination anymore. This increase in TP53, in turn, would arrest the cell proliferation and direct its death but this effect is counteracted by the viral protein E1B-55K. Inactivation of the ability of RB1 to arrest the cell cycle is critical for cellular transformation, uncontrolled cellular growth and proliferation induced by viral infection. Interaction with RBX1 and CUL1 inhibits ubiquitination of the proteins targeted by SCF(FBXW7) ubiquitin ligase complex, and may be linked to unregulated host cell proliferation. The tumorigenesis-restraining activity of E1A may be related to the disruption of the host CtBP-CtIP complex through the CtBP binding motif. The polypeptide is Early E1A protein (Canine adenovirus serotype 1 (strain CLL) (CAdV-1)).